The chain runs to 333 residues: Adenosine deaminase (333 aa).

Positions 12 and 14 each coordinate Zn(2+). Residues His14, Asp16, and Gly170 each coordinate substrate. His197 provides a ligand contact to Zn(2+). The active-site Proton donor is Glu200. Asp278 lines the Zn(2+) pocket. Residue Asp279 coordinates substrate.

It belongs to the metallo-dependent hydrolases superfamily. Adenosine and AMP deaminases family. Adenosine deaminase subfamily. Zn(2+) serves as cofactor.

It carries out the reaction adenosine + H2O + H(+) = inosine + NH4(+). The catalysed reaction is 2'-deoxyadenosine + H2O + H(+) = 2'-deoxyinosine + NH4(+). Catalyzes the hydrolytic deamination of adenosine and 2-deoxyadenosine. The sequence is that of Adenosine deaminase from Salmonella agona (strain SL483).